The chain runs to 453 residues: Nuclear distribution protein PAC1 (453 aa).

The region spanning 19–51 (QKDELHKSILDYFKTNNLHESFATLMREANQEG) is the LisH domain. Residues 69–96 (TSVIRLQKKIMEMESRISQLQEELSAAP) are a coiled coil. WD repeat units lie at residues 120–161 (GHRL…RTLK), 162–201 (GHTK…KNIK), 205–244 (GHDH…CTKT), 247–286 (GHAE…TKVE), 314–355 (LDPN…KTLT), 356–395 (GHDN…CTRT), and 413–452 (IEAP…KIWT).

Belongs to the WD repeat LIS1/nudF family. In terms of assembly, self-associates. Interacts with NDL1 and dynein.

The protein resides in the cytoplasm. The protein localises to the cytoskeleton. Its subcellular location is the spindle pole. Functionally, positively regulates the activity of the minus-end directed microtubule motor protein dynein. May enhance dynein-mediated microtubule sliding by targeting dynein to the microtubule plus end. Required for nuclear migration during vegetative growth as well as development. Required for localization of dynein to the mitotic spindle poles. Recruits additional proteins to the dynein complex at SPBs. Required for retrograde early endosome (EE) transport from the hyphal tip. This Mycosarcoma maydis (Corn smut fungus) protein is Nuclear distribution protein PAC1.